A 191-amino-acid chain; its full sequence is UPF0312 protein Pmen_0419 (191 aa).

A signal peptide spans 1-22 (MLKNALAALVLGSALIGGQAMA).

Belongs to the UPF0312 family. Type 1 subfamily.

The protein resides in the periplasm. The chain is UPF0312 protein Pmen_0419 from Ectopseudomonas mendocina (strain ymp) (Pseudomonas mendocina).